Consider the following 347-residue polypeptide: Indole-3-glycerol phosphate lyase, chloroplastic (347 aa).

2 disordered regions span residues 1–38 and 64–89; these read MAFAPKTSSSSSLSSALQAAQSPPLLLRRMSSTATPRR and APPQAPAPAPVPPKQAAAPAERRSRP. The N-terminal 53 residues, 1-53, are a transit peptide targeting the chloroplast; the sequence is MAFAPKTSSSSSLSSALQAAQSPPLLLRRMSSTATPRRRYDAAVVVTTTTTAR. Residues 8 to 27 show a composition bias toward low complexity; it reads SSSSSLSSALQAAQSPPLLL. The segment covering 64–76 has biased composition (pro residues); the sequence is APPQAPAPAPVPP.

This sequence belongs to the TrpA family. As to quaternary structure, tetramer of two alpha and two beta chains for the tryptophan synthase activity. Homodimer of alpha chains for the indole-3-glycerol phosphate lyase activity.

Its subcellular location is the plastid. It localises to the chloroplast. The catalysed reaction is (1S,2R)-1-C-(indol-3-yl)glycerol 3-phosphate = indole + D-glyceraldehyde 3-phosphate. It catalyses the reaction (1S,2R)-1-C-(indol-3-yl)glycerol 3-phosphate + L-serine = D-glyceraldehyde 3-phosphate + L-tryptophan + H2O. It participates in secondary metabolite biosynthesis; 2,4-dihydroxy-1,4-benzoxazin-3-one biosynthesis; 2,4-dihydroxy-1,4-benzoxazin-3-one from indoleglycerol phosphate: step 1/5. It functions in the pathway amino-acid biosynthesis; L-tryptophan biosynthesis; L-tryptophan from chorismate: step 5/5. In terms of biological role, the alpha subunit is responsible for the aldol cleavage of indoleglycerol phosphate to indole and glyceraldehyde 3-phosphate. In bacteria, tryptophan synthase alpha (TSA) activity is almost completely dependent on formation of an active alpha2beta2 complex with tryptophan synthase beta (TSB), and indole is usually not released during tryptophan synthesis. In maize, the TSA homolog BX1 catalyzes the formation of free indole from indole-3-glycerol phosphate, independently of TSB. In Zea mays (Maize), this protein is Indole-3-glycerol phosphate lyase, chloroplastic (BX1).